A 149-amino-acid polypeptide reads, in one-letter code: 3-dehydroquinate dehydratase (149 aa).

The active-site Proton acceptor is the Tyr-23. Positions 75, 81, and 88 each coordinate substrate. The active-site Proton donor is His-101. Residues 102-103 and Arg-112 each bind substrate; that span reads LS.

It belongs to the type-II 3-dehydroquinase family. In terms of assembly, homododecamer.

The enzyme catalyses 3-dehydroquinate = 3-dehydroshikimate + H2O. The protein operates within metabolic intermediate biosynthesis; chorismate biosynthesis; chorismate from D-erythrose 4-phosphate and phosphoenolpyruvate: step 3/7. Its function is as follows. Catalyzes a trans-dehydration via an enolate intermediate. This chain is 3-dehydroquinate dehydratase, found in Stenotrophomonas maltophilia (strain R551-3).